The primary structure comprises 201 residues: 3-isopropylmalate dehydratase small subunit (201 aa).

Belongs to the LeuD family. LeuD type 1 subfamily. Heterodimer of LeuC and LeuD.

It carries out the reaction (2R,3S)-3-isopropylmalate = (2S)-2-isopropylmalate. The protein operates within amino-acid biosynthesis; L-leucine biosynthesis; L-leucine from 3-methyl-2-oxobutanoate: step 2/4. Catalyzes the isomerization between 2-isopropylmalate and 3-isopropylmalate, via the formation of 2-isopropylmaleate. The polypeptide is 3-isopropylmalate dehydratase small subunit (Shigella dysenteriae serotype 1 (strain Sd197)).